The chain runs to 1819 residues: Non-reducing polyketide synthase 8 (1819 aa).

In terms of domain architecture, Starter acyltransferase (SAT) spans 38-265 (QLTLLSKQKQ…QKIINLPVYG (228 aa)). The 436-residue stretch at 405–840 (KSSIAIVGMS…GGNTMIAIEE (436 aa)) folds into the Ketosynthase family 3 (KS3) domain. Catalysis depends on for beta-ketoacyl synthase activity residues Cys-578, His-714, and His-758. A Malonyl-CoA:ACP transacylase (MAT) domain is found at 943–1262 (FAFTGQGASY…SLSTLHCAGA (320 aa)). An N-terminal hotdog fold region spans residues 1336-1476 (QRIIEESFDG…GDRSAWLSSW (141 aa)). The PKS/mFAS DH domain occupies 1336–1646 (QRIIEESFDG…FRQYPRILLN (311 aa)). Catalysis depends on His-1368, which acts as the Proton acceptor; for dehydratase activity. Residues 1404–1642 (AMNVADLEVV…GGIKFRQYPR (239 aa)) are dehydratase (DH) domain. The C-terminal hotdog fold stretch occupies residues 1498-1646 (IANRLSHNMA…FRQYPRILLN (149 aa)). The active-site Proton donor; for dehydratase activity is the Asp-1557. One can recognise a Carrier domain in the interval 1741–1818 (VDTNSVASKA…DLRSWLMEYY (78 aa)). Ser-1778 is subject to O-(pantetheine 4'-phosphoryl)serine.

The cofactor is pantetheine 4'-phosphate.

Its pathway is secondary metabolite biosynthesis. Its function is as follows. Non-reducing polyketide synthase; part of the gene cluster that mediates the biosynthesis of dibenzodioxocinones such as pestalotiollide B, a novel class of inhibitors against cholesterol ester transfer protein (CEPT). The biosynthesis initiates from condensation of acetate and malonate units catalyzed by the non-reducing PKS pks8/GME11356. Pks8/GME11356 lacks a thioesterase (TE) domain, which is important to the cyclizing of the third ring of atrochrysone carboxylic acid, and the esterase GME11355 might play the role of TE and catalyzes the cyclization reaction of the C ring. The lactamase-like protein GME11357 (or other beta-lactamases in Pestalotiopsis microspora) probably hydrolyzes the thioester bond between the ACP of pks8/GME11356 and the intermediate to release atrochrysone carboxylic acid, which is spontaneously dehydrates to form endocrocin anthrone. Endocrocin anthrone is further converted to emodin via the endocrocin intermediate. Emodin is then oxidized by several enzymes such as the Baeyer-Villiger oxidase GME11358, the oxidoreductase GME11367, the short chain dehydrogenase/reductase GME11373, as well as by other oxidoreductases from the cluster, to modify the A and C rings and open the B ring, and finally yield monodictyphenone. The prenyltransferase GME11375 may catalyze the addition reaction between the C5 side chains and the carbon bone of dibenzodioxocinones. The remaining biochemical reactions to the final product dibenzodioxocinones should be methylation catalyzed by methyltransferase GME11366 and reduction and lactonization reaction catalyzed by a series of oxidordeuctases. This Pestalotiopsis microspora protein is Non-reducing polyketide synthase 8.